The primary structure comprises 475 residues: Melanopsin (475 aa).

Residues 1–21 are Extracellular-facing; it reads MGTQHRIKVDVPDRVLYTVGS. A helical transmembrane segment spans residues 22 to 42; it reads CVLVIGSIGITGNLLVLYAFY. At 43-53 the chain is on the cytoplasmic side; it reads SNKRLRTPANY. The chain crosses the membrane as a helical span at residues 54-74; that stretch reads FIMNLAASDFLMSATQAPICF. Residues 75 to 90 are Extracellular-facing; the sequence is LNSMHTEWILGDIGCN. Cys-89 and Cys-167 are oxidised to a cystine. Residues 91–111 form a helical membrane-spanning segment; it reads FYVFCGALFGITSMMTLLAIS. The Cytoplasmic segment spans residues 112–134; that stretch reads VDRYCVITKPLQSIKRSSKKRSC. The chain crosses the membrane as a helical span at residues 135 to 155; it reads IIIAFVWLYSLGWSVCPLFGW. Over 156–187 the chain is Extracellular; the sequence is SSYIPEGLMISCTWDYVSYSPANRSYTMMLCC. A glycan (N-linked (GlcNAc...) asparagine) is linked at Asn-178. The helical transmembrane segment at 188 to 208 threads the bilayer; it reads FVFFIPLIIIFHCYLFMFLAI. Residues 209–240 are Cytoplasmic-facing; that stretch reads RSTGRNVQKLGSTYNRKSNVSQSVKSEWKLAK. Residues 241 to 261 form a helical membrane-spanning segment; it reads IAFVAIVVFVLSWSPYACVTL. Topologically, residues 262-276 are extracellular; it reads IAWAGYAKTLNPYSK. The chain crosses the membrane as a helical span at residues 277-297; it reads SVPAVIAKASAIYNPIIYAII. Lys-284 carries the post-translational modification N6-(retinylidene)lysine. Residues 298-475 are Cytoplasmic-facing; it reads HPRYRRTIRS…EQHQMEASSH (178 aa). Disordered stretches follow at residues 370 to 390 and 445 to 475; these read VEAARKKQQPHRSRSFSKQAE and PFGLNSSSTEENADTSDMEVQEQHQMEASSH. Residues 375–384 are compositionally biased toward basic residues; it reads KKQQPHRSRS. Over residues 445 to 454 the composition is skewed to polar residues; sequence PFGLNSSSTE. Residues 455-464 show a composition bias toward acidic residues; it reads ENADTSDMEV. Basic and acidic residues predominate over residues 465 to 475; sequence QEQHQMEASSH.

It belongs to the G-protein coupled receptor 1 family. Opsin subfamily. In terms of tissue distribution, highest level in the lateral eye. Low level in the brain.

The protein localises to the cell membrane. Photoreceptor implicated in non-image-forming responses to light. May be able to isomerize covalently bound all-trans retinal back to 11-cis retinal. The chain is Melanopsin (OPN4) from Podarcis siculus (Italian wall lizard).